The primary structure comprises 272 residues: MAIHLYKTSTSSTRNGAVQVKSNPRNNLISGQRRCGKGRNARGIITARHRGGGHKRLYRKIDFRRNEKDIYGKIVTIEYDPNRNAYICLIHYGDGEKRYILHPRGAIIGDTIVSGTEVPIKMGNALPLTDMPLGTAIHNIEITLGRGGQLARAAGAVAKLIAKEGKSATLKLPSGEVRLISKNCSATVGQVGNVGVNQKRLGRAGSKRWLGKRPVVRGVVMNPVDHPHGGGEGRAPIGRKSPTTPWGYPALGRRSRKRNKYSDNFIIRRRSK.

2 disordered regions span residues 1 to 33 (MAIHLYKTSTSSTRNGAVQVKSNPRNNLISGQR) and 220 to 272 (VMNP…RRSK). At Ala-2 the chain carries N-methylalanine. Over residues 7–30 (KTSTSSTRNGAVQVKSNPRNNLIS) the composition is skewed to polar residues.

This sequence belongs to the universal ribosomal protein uL2 family. As to quaternary structure, component of the chloroplast large ribosomal subunit (LSU). Mature 70S chloroplast ribosomes of higher plants consist of a small (30S) and a large (50S) subunit. The 30S small subunit contains 1 molecule of ribosomal RNA (16S rRNA) and 24 different proteins. The 50S large subunit contains 3 rRNA molecules (23S, 5S and 4.5S rRNA) and 33 different proteins.

It is found in the plastid. The protein resides in the chloroplast. Its function is as follows. Component of the chloroplast ribosome (chloro-ribosome), a dedicated translation machinery responsible for the synthesis of chloroplast genome-encoded proteins, including proteins of the transcription and translation machinery and components of the photosynthetic apparatus. The chain is Large ribosomal subunit protein uL2cz/uL2cy (rpl2-A) from Spinacia oleracea (Spinach).